A 960-amino-acid chain; its full sequence is Phosphoenolpyruvate carboxylase 2 (960 aa).

Residues H167 and K595 contribute to the active site.

The protein belongs to the PEPCase type 1 family. Homotetramer. Mg(2+) serves as cofactor.

The protein resides in the cytoplasm. It catalyses the reaction oxaloacetate + phosphate = phosphoenolpyruvate + hydrogencarbonate. Its pathway is photosynthesis; C3 acid pathway. Through the carboxylation of phosphoenolpyruvate (PEP) it forms oxaloacetate, a four-carbon dicarboxylic acid source for the tricarboxylic acid cycle. The polypeptide is Phosphoenolpyruvate carboxylase 2 (Sorghum bicolor (Sorghum)).